A 296-amino-acid polypeptide reads, in one-letter code: Bifunctional protein FolD (296 aa).

Residues 166 to 168 (GRS), Ser-191, and Ile-232 contribute to the NADP(+) site.

This sequence belongs to the tetrahydrofolate dehydrogenase/cyclohydrolase family. Homodimer.

The catalysed reaction is (6R)-5,10-methylene-5,6,7,8-tetrahydrofolate + NADP(+) = (6R)-5,10-methenyltetrahydrofolate + NADPH. The enzyme catalyses (6R)-5,10-methenyltetrahydrofolate + H2O = (6R)-10-formyltetrahydrofolate + H(+). It functions in the pathway one-carbon metabolism; tetrahydrofolate interconversion. Functionally, catalyzes the oxidation of 5,10-methylenetetrahydrofolate to 5,10-methenyltetrahydrofolate and then the hydrolysis of 5,10-methenyltetrahydrofolate to 10-formyltetrahydrofolate. The polypeptide is Bifunctional protein FolD (Cereibacter sphaeroides (strain ATCC 17025 / ATH 2.4.3) (Rhodobacter sphaeroides)).